We begin with the raw amino-acid sequence, 767 residues long: Photosystem I P700 chlorophyll a apoprotein A1 (767 aa).

The interval 1 to 22 is disordered; that stretch reads MTISPPESGEKNKKVLEDPVKA. Positions 8–22 are enriched in basic and acidic residues; sequence SGEKNKKVLEDPVKA. 8 helical membrane passes run 76–99, 162–185, 201–225, 309–327, 368–391, 407–433, 455–477, and 558–576; these read IFSA…FHGA, LMAL…FHYH, LNHH…HIGA, VSHH…GHMY, RHAQ…HHMY, LGLF…IAMV, ALIS…LYIH, and LMIH…LILL. [4Fe-4S] cluster contacts are provided by cysteine 600 and cysteine 609. The next 2 membrane-spanning stretches (helical) occupy residues 616–637 and 681–703; these read HVFL…HFSW and ISMY…MFLF. Divinylchlorophyll a' is bound at residue histidine 692. Divinyl chlorophyll a is bound by residues methionine 700 and tyrosine 708. Tryptophan 709 is a phylloquinone binding site. The helical transmembrane segment at 741 to 761 threads the bilayer; sequence AVGVTHFLVGGIATTWAFFHA.

The protein belongs to the PsaA/PsaB family. The PsaA/B heterodimer binds the P700 divinyl chlorophyll special pair and subsequent electron acceptors. PSI consists of a core antenna complex that captures photons, and an electron transfer chain that converts photonic excitation into a charge separation. The cyanobacterial PSI reaction center is composed of one copy each of PsaA,B,C,D,E,F,I,J,K,L,M and X, and forms trimeric complexes. It depends on PSI electron transfer chain: 5 divinyl chlorophyll a, 1 divinyl chlorophyll a', 2 phylloquinones and 3 4Fe-4S clusters. PSI core antenna: 90 divinyl chlorophyll a, 22 carotenoids, 3 phospholipids and 1 galactolipid. P700 is a divinyl chlorophyll a/divinyl chlorophyll a' dimer, A0 is one or more divinyl chlorophyll a, A1 is one or both phylloquinones and FX is a shared 4Fe-4S iron-sulfur center. as a cofactor.

The protein resides in the cellular thylakoid membrane. It catalyses the reaction reduced [plastocyanin] + hnu + oxidized [2Fe-2S]-[ferredoxin] = oxidized [plastocyanin] + reduced [2Fe-2S]-[ferredoxin]. In terms of biological role, psaA and PsaB bind P700, the primary electron donor of photosystem I (PSI), as well as the electron acceptors A0, A1 and FX. PSI is a plastocyanin/cytochrome c6-ferredoxin oxidoreductase, converting photonic excitation into a charge separation, which transfers an electron from the donor P700 chlorophyll pair to the spectroscopically characterized acceptors A0, A1, FX, FA and FB in turn. Oxidized P700 is reduced on the lumenal side of the thylakoid membrane by plastocyanin or cytochrome c6. This chain is Photosystem I P700 chlorophyll a apoprotein A1, found in Prochlorococcus marinus (strain MIT 9301).